The primary structure comprises 312 residues: Taste receptor type 2 member 7 (312 aa).

At 1-9 (MTYETDTTL) the chain is on the extracellular side. A helical membrane pass occupies residues 10 to 30 (MFVAVCEALVGILGNAFIALV). Topologically, residues 31–49 (NFMGWMKNRKITAIDLILS) are cytoplasmic. A helical transmembrane segment spans residues 50–70 (SLAMSRICLQCIILLDCIILV). Topologically, residues 71–101 (QYPDTYNRGKEMRIIDFFWTLTNHLSVWFAT) are extracellular. The chain crosses the membrane as a helical span at residues 102–122 (CLSIFYFFKIANFFHPLFLWI). Residues 123-128 (KWRIDK) are Cytoplasmic-facing. Residues 129–149 (LILRTLLACLILSLCFSLPVT) traverse the membrane as a helical segment. Over 150–187 (ENLTDDFRRCVKTKERINSTLRCKLNKAGYASVKVNLN) the chain is Extracellular. Residues asparagine 151 and asparagine 167 are each glycosylated (N-linked (GlcNAc...) asparagine). Residues 188-208 (LVMLFPFSVSLVSFLLLILSL) form a helical membrane-spanning segment. At 209–235 (WRHTRQMQLNVTGYNDPSTTAHVKATK) the chain is on the cytoplasmic side. A helical membrane pass occupies residues 236 to 256 (AVISFLVLFIVYCLAFLIATS). The Extracellular portion of the chain corresponds to 257–266 (SYFMPESELA). The helical transmembrane segment at 267–287 (VIWGELIALIYPSSHSFILIL) threads the bilayer. Over 288 to 312 (GNSKLKQASVRVLCRVKTMLKGRKY) the chain is Cytoplasmic.

This sequence belongs to the G-protein coupled receptor T2R family. Expressed in subsets of taste receptor cells of the tongue and palate epithelium and exclusively in gustducin-positive cells. Expressed in 15% taste bud cells in circumvallate and foliate papillae but only in 2% in fungiform papillae. Expressed in the duodenum, antrum and fundus (part of the stomach) and in gastric endocrine cells.

It is found in the membrane. In terms of biological role, gustducin-coupled receptor implicated in the perception of bitter compounds in the oral cavity and the gastrointestinal tract. Signals through PLCB2 and the calcium-regulated cation channel TRPM5. This chain is Taste receptor type 2 member 7 (Tas2r7), found in Rattus norvegicus (Rat).